Consider the following 606-residue polypeptide: NADH-ubiquinone oxidoreductase chain 5 (606 aa).

16 consecutive transmembrane segments (helical) span residues 4–24 (FSSL…SSIL), 38–58 (NIIS…IHSG), 87–107 (MIFV…SLWY), 117–137 (FFKY…ANNL), 140–160 (LFIG…WWYG), 171–191 (AILY…WFLF), 211–233 (LPLL…HPWL), 241–261 (TPVS…FLLI), 273–293 (IQSL…ICAL), 301–320 (IIAF…IGIN), 325–347 (AFLH…GSII), 366–386 (MPFT…MPFL), 413–433 (LIAT…ALLG), 457–477 (LLIG…PTTI), 488–508 (LTAL…SLIT), and 584–604 (IKLY…LFNL).

The protein belongs to the complex I subunit 5 family. Core subunit of respiratory chain NADH dehydrogenase (Complex I) which is composed of 45 different subunits.

It localises to the mitochondrion inner membrane. The catalysed reaction is a ubiquinone + NADH + 5 H(+)(in) = a ubiquinol + NAD(+) + 4 H(+)(out). Functionally, core subunit of the mitochondrial membrane respiratory chain NADH dehydrogenase (Complex I) which catalyzes electron transfer from NADH through the respiratory chain, using ubiquinone as an electron acceptor. Essential for the catalytic activity and assembly of complex I. In Equus asinus (Donkey), this protein is NADH-ubiquinone oxidoreductase chain 5 (MT-ND5).